The chain runs to 256 residues: Imidazole glycerol phosphate synthase subunit HisF (256 aa).

Active-site residues include Asp12 and Asp131.

This sequence belongs to the HisA/HisF family. Heterodimer of HisH and HisF.

The protein localises to the cytoplasm. The enzyme catalyses 5-[(5-phospho-1-deoxy-D-ribulos-1-ylimino)methylamino]-1-(5-phospho-beta-D-ribosyl)imidazole-4-carboxamide + L-glutamine = D-erythro-1-(imidazol-4-yl)glycerol 3-phosphate + 5-amino-1-(5-phospho-beta-D-ribosyl)imidazole-4-carboxamide + L-glutamate + H(+). The protein operates within amino-acid biosynthesis; L-histidine biosynthesis; L-histidine from 5-phospho-alpha-D-ribose 1-diphosphate: step 5/9. In terms of biological role, IGPS catalyzes the conversion of PRFAR and glutamine to IGP, AICAR and glutamate. The HisF subunit catalyzes the cyclization activity that produces IGP and AICAR from PRFAR using the ammonia provided by the HisH subunit. The protein is Imidazole glycerol phosphate synthase subunit HisF of Bifidobacterium longum (strain DJO10A).